The following is a 355-amino-acid chain: Uroporphyrinogen decarboxylase (355 aa).

Substrate-binding positions include 27 to 31 (RQAGR), D77, Y154, T209, and H327.

This sequence belongs to the uroporphyrinogen decarboxylase family. In terms of assembly, homodimer.

It localises to the cytoplasm. It carries out the reaction uroporphyrinogen III + 4 H(+) = coproporphyrinogen III + 4 CO2. It functions in the pathway porphyrin-containing compound metabolism; protoporphyrin-IX biosynthesis; coproporphyrinogen-III from 5-aminolevulinate: step 4/4. Functionally, catalyzes the decarboxylation of four acetate groups of uroporphyrinogen-III to yield coproporphyrinogen-III. This chain is Uroporphyrinogen decarboxylase, found in Tolumonas auensis (strain DSM 9187 / NBRC 110442 / TA 4).